A 216-amino-acid polypeptide reads, in one-letter code: MTKILPVSTISIFRIILILPQINMELLPTKAWLVLDDVKEINEPTKPVQFPLDQASLDCIAKMMAYVDASYNGDAEKYGIIPGIGIAANQIGYWKQMFYIHLMDGGVEHKCLLINPKIINLSANKSFLKSGEGCLSVPKMHQGYVIRHEWITITGFDWLQQKEITITATGLFGMCLQHEFDHLQGRFYYHRINPLNPLFTNKEWKVINPALPSDSE.

Positions 134 and 178 each coordinate Fe cation. E179 is an active-site residue. Fe cation is bound at residue H182.

This sequence belongs to the polypeptide deformylase family. It depends on Fe(2+) as a cofactor.

The catalysed reaction is N-terminal N-formyl-L-methionyl-[peptide] + H2O = N-terminal L-methionyl-[peptide] + formate. In terms of biological role, removes the formyl group from the N-terminal Met of newly synthesized proteins. Requires at least a dipeptide for an efficient rate of reaction. N-terminal L-methionine is a prerequisite for activity but the enzyme has broad specificity at other positions. This chain is Peptide deformylase, found in Mycoplasma pneumoniae (strain ATCC 29342 / M129 / Subtype 1) (Mycoplasmoides pneumoniae).